Consider the following 492-residue polypeptide: Glutamyl-tRNA(Gln) amidotransferase subunit A (492 aa).

Residues K84 and S159 each act as charge relay system in the active site. The active-site Acyl-ester intermediate is S183.

Belongs to the amidase family. GatA subfamily. In terms of assembly, heterotrimer of A, B and C subunits.

It catalyses the reaction L-glutamyl-tRNA(Gln) + L-glutamine + ATP + H2O = L-glutaminyl-tRNA(Gln) + L-glutamate + ADP + phosphate + H(+). Functionally, allows the formation of correctly charged Gln-tRNA(Gln) through the transamidation of misacylated Glu-tRNA(Gln) in organisms which lack glutaminyl-tRNA synthetase. The reaction takes place in the presence of glutamine and ATP through an activated gamma-phospho-Glu-tRNA(Gln). The sequence is that of Glutamyl-tRNA(Gln) amidotransferase subunit A from Anaeromyxobacter sp. (strain K).